Here is a 340-residue protein sequence, read N- to C-terminus: Eukaryotic translation initiation factor 3 subunit I (340 aa).

WD repeat units follow at residues 8–47 (GHER…RLGT), 50–89 (GHQG…CVKV), 91–135 (DFPT…GEGN), 150–189 (CEQS…QLQN), 194–233 (EFDY…VMKT), and 291–330 (GHFG…FDFM).

Belongs to the eIF-3 subunit I family. Component of the eukaryotic translation initiation factor 3 (eIF-3) complex.

Its subcellular location is the cytoplasm. Its function is as follows. Component of the eukaryotic translation initiation factor 3 (eIF-3) complex, which is involved in protein synthesis of a specialized repertoire of mRNAs and, together with other initiation factors, stimulates binding of mRNA and methionyl-tRNAi to the 40S ribosome. The eIF-3 complex specifically targets and initiates translation of a subset of mRNAs involved in cell proliferation. This Coccidioides immitis (strain RS) (Valley fever fungus) protein is Eukaryotic translation initiation factor 3 subunit I.